Reading from the N-terminus, the 141-residue chain is Large ribosomal subunit protein uL16 (141 aa).

Positions 1 to 23 (MLMPKRTKYRKQMKGRNRGKAHR) are disordered.

It belongs to the universal ribosomal protein uL16 family. In terms of assembly, part of the 50S ribosomal subunit.

Binds 23S rRNA and is also seen to make contacts with the A and possibly P site tRNAs. In Helicobacter pylori (strain J99 / ATCC 700824) (Campylobacter pylori J99), this protein is Large ribosomal subunit protein uL16.